The chain runs to 200 residues: MRLSGRGLRCVRGGREVFDGLDFEAAGGEALALIGRNGAGKTSLLRLIAGLLMPAAGSIDFDGSEPDTPVAEQAHYLGHRDALKPSLSVVENLAFWRDFLGGEPTDLMAGITAVGLSHAAELPAAYLSAGQRRRLSIARLLVVRRPIWLLDEPTSALDVRGQAMFARLMSDHLASGGLIVAATHSPLGITTREMRIGAAA.

An ABC transporter domain is found at 1-200 (MRLSGRGLRC…TREMRIGAAA (200 aa)). 35–42 (GRNGAGKT) contributes to the ATP binding site.

It belongs to the ABC transporter superfamily. CcmA exporter (TC 3.A.1.107) family. In terms of assembly, the complex is composed of two ATP-binding proteins (CcmA) and two transmembrane proteins (CcmB).

Its subcellular location is the cell inner membrane. The catalysed reaction is heme b(in) + ATP + H2O = heme b(out) + ADP + phosphate + H(+). Its function is as follows. Part of the ABC transporter complex CcmAB involved in the biogenesis of c-type cytochromes; once thought to export heme, this seems not to be the case, but its exact role is uncertain. Responsible for energy coupling to the transport system. In Rhodopseudomonas palustris (strain HaA2), this protein is Cytochrome c biogenesis ATP-binding export protein CcmA.